The following is a 387-amino-acid chain: Formate-dependent phosphoribosylglycinamide formyltransferase (387 aa).

N(1)-(5-phospho-beta-D-ribosyl)glycinamide contacts are provided by residues 21–22 (EL) and glutamate 81. ATP contacts are provided by residues arginine 113, lysine 154, 159–164 (SSGHGQ), 193–196 (EEFV), and glutamate 201. Positions 118–306 (VFAAETLDLK…EFALHVRAVL (189 aa)) constitute an ATP-grasp domain. The Mg(2+) site is built by glutamate 265 and glutamate 277. N(1)-(5-phospho-beta-D-ribosyl)glycinamide-binding positions include aspartate 284, lysine 352, and 359-360 (RR).

It belongs to the PurK/PurT family. In terms of assembly, homodimer.

The enzyme catalyses N(1)-(5-phospho-beta-D-ribosyl)glycinamide + formate + ATP = N(2)-formyl-N(1)-(5-phospho-beta-D-ribosyl)glycinamide + ADP + phosphate + H(+). It functions in the pathway purine metabolism; IMP biosynthesis via de novo pathway; N(2)-formyl-N(1)-(5-phospho-D-ribosyl)glycinamide from N(1)-(5-phospho-D-ribosyl)glycinamide (formate route): step 1/1. Involved in the de novo purine biosynthesis. Catalyzes the transfer of formate to 5-phospho-ribosyl-glycinamide (GAR), producing 5-phospho-ribosyl-N-formylglycinamide (FGAR). Formate is provided by PurU via hydrolysis of 10-formyl-tetrahydrofolate. This Sulfurovum sp. (strain NBC37-1) protein is Formate-dependent phosphoribosylglycinamide formyltransferase.